Consider the following 1312-residue polypeptide: AT-rich interactive domain-containing protein 4B (1312 aa).

Disordered regions lie at residues Pro-124–Arg-166 and Lys-266–Pro-306. Phosphoserine is present on residues Ser-276, Ser-295, and Ser-296. Over residues Glu-277–Phe-305 the composition is skewed to acidic residues. The region spanning Pro-306–Arg-398 is the ARID domain. Glycyl lysine isopeptide (Lys-Gly) (interchain with G-Cter in SUMO2) cross-links involve residues Lys-429, Lys-440, and Lys-462. Disordered regions lie at residues Glu-458–Val-577, Ile-635–Ser-680, Gln-708–Phe-894, Leu-909–Pro-1212, and Ser-1252–Ala-1288. Residues Ile-465 to Lys-473 form an antigenic epitope region. Ser-483 is subject to Phosphoserine. Positions Ser-483–Asp-496 are enriched in basic and acidic residues. Lys-517 is covalently cross-linked (Glycyl lysine isopeptide (Lys-Gly) (interchain with G-Cter in SUMO2)). The span at Asn-532–Glu-567 shows a compositional bias: acidic residues. Positions Gly-572 to Ile-624 constitute a Tudor-knot domain. Over residues Asn-643–Ser-656 the composition is skewed to basic and acidic residues. Residues Ser-666, Ser-675, and Ser-717 each carry the phosphoserine modification. 2 stretches are compositionally biased toward basic and acidic residues: residues Glu-722–Gln-754 and Ser-778–Glu-787. Residues Met-728–Gln-754 adopt a coiled-coil conformation. A Glycyl lysine isopeptide (Lys-Gly) (interchain with G-Cter in SUMO2) cross-link involves residue Lys-751. Phosphoserine is present on residues Ser-778 and Ser-790. Positions Val-788–Glu-799 are enriched in acidic residues. Thr-793 is modified (phosphothreonine). 4 stretches are compositionally biased toward basic and acidic residues: residues Val-807–Ser-816, Cys-828–Leu-852, Leu-909–Val-927, and Lys-995–Glu-1010. Ser-1014 carries the post-translational modification Phosphoserine. Thr-1026 is modified (phosphothreonine). Low complexity predominate over residues Glu-1028–Glu-1037. Ser-1029 is modified (phosphoserine). Over residues Gly-1038 to Val-1047 the composition is skewed to polar residues. The span at Glu-1056–Thr-1065 shows a compositional bias: basic and acidic residues. Positions Ser-1087 to Ser-1101 are enriched in low complexity. The tract at residues Lys-1130–Lys-1137 is antigenic epitope. The span at Lys-1130–Lys-1148 shows a compositional bias: basic residues. A Phosphothreonine modification is found at Thr-1150. 4 positions are modified to phosphoserine: Ser-1152, Ser-1153, Ser-1155, and Ser-1159. Polar residues predominate over residues Glu-1162 to Pro-1191. Residues Lys-1196–Ser-1208 show a composition bias toward basic and acidic residues. Residues Glu-1231–Glu-1270 are a coiled coil. Residues Ala-1272–Ala-1288 show a composition bias toward low complexity.

In terms of assembly, component of a Sin3A corepressor complex consisting of SIN3A, SAP130, SUDS3/SAP45, SAP180, HDAC1 and HDAC2. Interacts with ARID4A. Interacts with AR. In terms of tissue distribution, highly expressed in the testis and in breast, lung, colon, pancreatic and ovarian cancers. Expressed at low levels in the thymus, prostate and ovary.

The protein localises to the nucleus. Its subcellular location is the cytoplasm. In terms of biological role, acts as a transcriptional repressor. May function in the assembly and/or enzymatic activity of the Sin3A corepressor complex or in mediating interactions between the complex and other regulatory complexes. Plays a role in the regulation of epigenetic modifications at the PWS/AS imprinting center near the SNRPN promoter, where it might function as part of a complex with RB1 and ARID4A. Involved in spermatogenesis, together with ARID4A, where it functions as a transcriptional coactivator for AR (androgen receptor) and enhances expression of genes required for sperm maturation. Regulates expression of the tight junction protein CLDN3 in the testis, which is important for integrity of the blood-testis barrier. Plays a role in myeloid homeostasis where it regulates the histone methylation state of bone marrow cells and expression of various genes involved in hematopoiesis. May function as a leukemia suppressor. The chain is AT-rich interactive domain-containing protein 4B (ARID4B) from Homo sapiens (Human).